Here is a 251-residue protein sequence, read N- to C-terminus: uncharacterized protein (251 aa).

A Response regulatory domain is found at 3–118 (KVVICDDERI…QLEHILDILV (116 aa)). Asp-55 is subject to 4-aspartylphosphate. Residues 152-249 (NQILSQIKQH…HMSPSDYNKL (98 aa)) enclose the HTH araC/xylS-type domain. 2 DNA-binding regions (H-T-H motif) span residues 169-190 (LDLI…KEHV) and 216-239 (HYEI…KKYL).

In terms of processing, phosphorylated by SE_0166.

Its subcellular location is the cytoplasm. Functionally, probable member of the two-component regulatory system SE_0166/SE_0165. This is an uncharacterized protein from Staphylococcus epidermidis (strain ATCC 12228 / FDA PCI 1200).